The chain runs to 89 residues: Small ribosomal subunit protein uS15 (89 aa).

Belongs to the universal ribosomal protein uS15 family. As to quaternary structure, part of the 30S ribosomal subunit. Forms a bridge to the 50S subunit in the 70S ribosome, contacting the 23S rRNA.

In terms of biological role, one of the primary rRNA binding proteins, it binds directly to 16S rRNA where it helps nucleate assembly of the platform of the 30S subunit by binding and bridging several RNA helices of the 16S rRNA. Functionally, forms an intersubunit bridge (bridge B4) with the 23S rRNA of the 50S subunit in the ribosome. This chain is Small ribosomal subunit protein uS15, found in Streptococcus pyogenes serotype M1.